We begin with the raw amino-acid sequence, 773 residues long: Cadherin-5 (773 aa).

The signal sequence occupies residues 1 to 18 (MKKLILLFSLFLAPAFSY). Residues 19–40 (KENQKINQNFSSNNTSHKRLKR) constitute a propeptide that is removed on maturation. 3 N-linked (GlcNAc...) asparagine glycosylation sites follow: N27, N31, and N32. 5 Cadherin domains span residues 39-144 (KRDW…APIF), 145-251 (VQKI…FPVF), 252-366 (KHPS…PPVF), 367-474 (TKLS…APEL), and 474-582 (LVYP…DFTF). The Extracellular portion of the chain corresponds to 41-595 (DWIWNRMHIR…RAKQVGVSVQ (555 aa)). Residues E51, E52, D102, and E104 each contribute to the Ca(2+) site. N121 carries N-linked (GlcNAc...) asparagine glycosylation. 5 residues coordinate Ca(2+): D136, I137, N138, D139, and N140. N-linked (GlcNAc...) asparagine glycosylation occurs at N150. The Ca(2+) site is built by D170, D172, H179, and D224. N-linked (GlcNAc...) asparagine glycans are attached at residues N263, N437, N519, and N531. The chain crosses the membrane as a helical span at residues 596 to 617 (ALVAIFICIFTIIAVIALLILL). Residues 618–773 (RKRHKKDLSG…GSEPNEDFVY (156 aa)) lie on the Cytoplasmic side of the membrane.

Post-translationally, N-glycosylated. In terms of processing, O-glycosylated.

It localises to the cell junction. Its subcellular location is the adherens junction. The protein localises to the cell membrane. It is found in the cytoplasm. Its function is as follows. Cadherins are calcium-dependent cell adhesion proteins. They preferentially interact with themselves in a homophilic manner in connecting cells; cadherins may thus contribute to the sorting of heterogeneous cell types. This cadherin may play a important role in endothelial cell biology through control of the cohesion and organization of the intercellular junctions. Plays a role in coupling actin fibers to cell junctions in endothelial cells. Associates with CTNND1/p120-catenin to control CADH5 endocytosis. The polypeptide is Cadherin-5 (Gallus gallus (Chicken)).